Consider the following 578-residue polypeptide: MALLQTSLIWVVYAIAIAVLIAVASVFIYVYQTPRDRSPSVTLTCIFAITTLLATVLLLPVDVALVSSTNSSALGRRKDWATDHEVNKILFSLKVVYYLLYSLDALLCLLVIPFTYFWYEEYDEVAAEEGEQTTGNRFWAAFKYTITFIAIVIVLFLVGFFVPVAKDNHSGGLDYFKKLLTENRGERALTFALGLLITIGLCLYVLYTSTGLALLPVSLIKTAPSISAPNLKATTAMQLDSNRERQRQLEGRCGGNTELLSSKDRRELDMLVREERTLIRRQRLADEAQGEGRSWLMRAWLKTEAVFRPFKLLGGIILLIIALVIWVSMLLTAIDKATNSFCKYHCGYILGHITVFNPINWVFVQAAKVFPVDYVIFTLLVLLFFCSSVVGIAIVGIRFLWIRIFQIRKGHTSPQALLLTTAMLMLTILALNYSVSMVVAPQYATFGPQTFCDRTTGTFGEQADCSNARHLIKPCSEMIKNPAASGVCTPSIASTFLNRVTINFPFFGVIFFWGQFVFLGVYLIVVVASLFRSPKLDERQMDEDAEEAEEEGLLASTGRRLDTAWQDITGRSNRQRDS.

Transmembrane regions (helical) follow at residues 8–28 (LIWV…SVFI) and 46–66 (IFAI…VALV). N-linked (GlcNAc...) asparagine glycosylation occurs at Asn70. 2 helical membrane-spanning segments follow: residues 95–115 (VVYY…IPFT) and 145–165 (TITF…VPVA). The N-linked (GlcNAc...) asparagine glycan is linked to Asn168. 6 helical membrane-spanning segments follow: residues 188 to 208 (ALTF…VLYT), 312 to 332 (LLGG…MLLT), 347 to 367 (GYIL…VQAA), 375 to 395 (VIFT…IAIV), 419 to 439 (LTTA…SMVV), and 506 to 526 (FFGV…LIVV). The tract at residues 539 to 578 (RQMDEDAEEAEEEGLLASTGRRLDTAWQDITGRSNRQRDS) is disordered. The span at 540 to 552 (QMDEDAEEAEEEG) shows a compositional bias: acidic residues.

The protein belongs to the LIMR family. LMBRD1 subfamily.

The protein localises to the lysosome membrane. Functionally, probable lysosomal cobalamin transporter. Required to export cobalamin from lysosomes allowing its conversion to cofactors. In Aspergillus terreus (strain NIH 2624 / FGSC A1156), this protein is Probable lysosomal cobalamin transporter.